An 89-amino-acid chain; its full sequence is Small ribosomal subunit protein uS15 (89 aa).

The protein belongs to the universal ribosomal protein uS15 family. In terms of assembly, part of the 30S ribosomal subunit. Forms a bridge to the 50S subunit in the 70S ribosome, contacting the 23S rRNA.

Its function is as follows. One of the primary rRNA binding proteins, it binds directly to 16S rRNA where it helps nucleate assembly of the platform of the 30S subunit by binding and bridging several RNA helices of the 16S rRNA. Forms an intersubunit bridge (bridge B4) with the 23S rRNA of the 50S subunit in the ribosome. This is Small ribosomal subunit protein uS15 from Shewanella loihica (strain ATCC BAA-1088 / PV-4).